Consider the following 282-residue polypeptide: 4-hydroxy-3-methylbut-2-enyl diphosphate reductase (282 aa).

C12 provides a ligand contact to [4Fe-4S] cluster. (2E)-4-hydroxy-3-methylbut-2-enyl diphosphate is bound by residues H40 and H72. 2 residues coordinate dimethylallyl diphosphate: H40 and H72. The isopentenyl diphosphate site is built by H40 and H72. C94 lines the [4Fe-4S] cluster pocket. H122 serves as a coordination point for (2E)-4-hydroxy-3-methylbut-2-enyl diphosphate. H122 contacts dimethylallyl diphosphate. Residue H122 participates in isopentenyl diphosphate binding. E124 functions as the Proton donor in the catalytic mechanism. T160 contacts (2E)-4-hydroxy-3-methylbut-2-enyl diphosphate. C188 lines the [4Fe-4S] cluster pocket. Residues S216, N218, and S260 each coordinate (2E)-4-hydroxy-3-methylbut-2-enyl diphosphate. Dimethylallyl diphosphate is bound by residues S216, N218, and S260. 3 residues coordinate isopentenyl diphosphate: S216, N218, and S260.

It belongs to the IspH family. [4Fe-4S] cluster serves as cofactor.

It catalyses the reaction isopentenyl diphosphate + 2 oxidized [2Fe-2S]-[ferredoxin] + H2O = (2E)-4-hydroxy-3-methylbut-2-enyl diphosphate + 2 reduced [2Fe-2S]-[ferredoxin] + 2 H(+). The catalysed reaction is dimethylallyl diphosphate + 2 oxidized [2Fe-2S]-[ferredoxin] + H2O = (2E)-4-hydroxy-3-methylbut-2-enyl diphosphate + 2 reduced [2Fe-2S]-[ferredoxin] + 2 H(+). It participates in isoprenoid biosynthesis; dimethylallyl diphosphate biosynthesis; dimethylallyl diphosphate from (2E)-4-hydroxy-3-methylbutenyl diphosphate: step 1/1. The protein operates within isoprenoid biosynthesis; isopentenyl diphosphate biosynthesis via DXP pathway; isopentenyl diphosphate from 1-deoxy-D-xylulose 5-phosphate: step 6/6. Its function is as follows. Catalyzes the conversion of 1-hydroxy-2-methyl-2-(E)-butenyl 4-diphosphate (HMBPP) into a mixture of isopentenyl diphosphate (IPP) and dimethylallyl diphosphate (DMAPP). Acts in the terminal step of the DOXP/MEP pathway for isoprenoid precursor biosynthesis. This Geotalea daltonii (strain DSM 22248 / JCM 15807 / FRC-32) (Geobacter daltonii) protein is 4-hydroxy-3-methylbut-2-enyl diphosphate reductase.